Consider the following 441-residue polypeptide: N-succinylarginine dihydrolase (441 aa).

Substrate contacts are provided by residues Ala-19–Ser-28, Asn-110, and His-137–Arg-138. Glu-174 is an active-site residue. Arg-212 contacts substrate. Residue His-248 is part of the active site. Substrate-binding residues include Asp-250 and Asn-359. Cys-365 (nucleophile) is an active-site residue.

This sequence belongs to the succinylarginine dihydrolase family. In terms of assembly, homodimer.

It carries out the reaction N(2)-succinyl-L-arginine + 2 H2O + 2 H(+) = N(2)-succinyl-L-ornithine + 2 NH4(+) + CO2. Its pathway is amino-acid degradation; L-arginine degradation via AST pathway; L-glutamate and succinate from L-arginine: step 2/5. Its function is as follows. Catalyzes the hydrolysis of N(2)-succinylarginine into N(2)-succinylornithine, ammonia and CO(2). This chain is N-succinylarginine dihydrolase, found in Erwinia tasmaniensis (strain DSM 17950 / CFBP 7177 / CIP 109463 / NCPPB 4357 / Et1/99).